The primary structure comprises 152 residues: Interleukin-3 (152 aa).

A signal peptide spans 1-19 (MSCLPVLLLLQLLVSPGLQ). 2 N-linked (GlcNAc...) asparagine glycosylation sites follow: asparagine 34 and asparagine 89. An intrachain disulfide couples cysteine 35 to cysteine 103.

This sequence belongs to the IL-3 family. In terms of assembly, monomer. As to expression, activated T-cells, mast cells, natural killer cells.

It is found in the secreted. Functionally, granulocyte/macrophage colony-stimulating factors are cytokines that act in hematopoiesis by controlling the production, differentiation, and function of 2 related white cell populations of the blood, the granulocytes and the monocytes-macrophages. Its function is as follows. This CSF induces granulocytes, macrophages, mast cells, stem cells, erythroid cells, eosinophils and megakaryocytes. This Hylobates lar (Lar gibbon) protein is Interleukin-3 (IL3).